The sequence spans 83 residues: RNA-binding protein Hfq (83 aa).

The Sm domain maps to 11–71 (DTFLNHVRKN…ISTIMPGHPV (61 aa)).

Belongs to the Hfq family. In terms of assembly, homohexamer.

Its function is as follows. RNA chaperone that binds small regulatory RNA (sRNAs) and mRNAs to facilitate mRNA translational regulation in response to envelope stress, environmental stress and changes in metabolite concentrations. Also binds with high specificity to tRNAs. This is RNA-binding protein Hfq from Methylobacterium radiotolerans (strain ATCC 27329 / DSM 1819 / JCM 2831 / NBRC 15690 / NCIMB 10815 / 0-1).